Here is a 580-residue protein sequence, read N- to C-terminus: Arginine--tRNA ligase (580 aa).

A 'HIGH' region motif is present at residues 131–141 (ANPTGPLHVGH).

It belongs to the class-I aminoacyl-tRNA synthetase family. Monomer.

Its subcellular location is the cytoplasm. It catalyses the reaction tRNA(Arg) + L-arginine + ATP = L-arginyl-tRNA(Arg) + AMP + diphosphate. This is Arginine--tRNA ligase from Ruegeria sp. (strain TM1040) (Silicibacter sp.).